We begin with the raw amino-acid sequence, 840 residues long: Leucine-zipper-like transcriptional regulator 1 (840 aa).

A2 carries the post-translational modification N-acetylalanine. Kelch repeat units follow at residues 79–128, 130–185, 187–238, 239–285, 295–341, and 399–450; these read AIYV…VYGS, MFVF…VYSD, LWIF…VCRD, KMFV…QRRY, HLYV…PERA, and AMYI…FVLG. BTB domains follow at residues 443–537 and 667–736; these read CDVE…KYPR and CDIT…NMPP.

The protein belongs to the LZTR1 family. In terms of assembly, homodimer. Component of the BCR(LZTR1) E3 ubiquitin ligase complex, at least composed of CUL3, LZTR1 and RBX1. Interacts with Ras (K-Ras/KRAS, N-Ras/NRAS and H-Ras/HRAS). Interacts with RAF1. Interacts with SHOC2. Interacts with PPP1CB. In terms of processing, phosphorylated on tyrosine upon induction of apoptosis, leading to its degradation by the proteasome.

Its subcellular location is the endomembrane system. The protein resides in the recycling endosome. It is found in the golgi apparatus. Its pathway is protein modification; protein ubiquitination. In terms of biological role, substrate-specific adapter of a BCR (BTB-CUL3-RBX1) E3 ubiquitin-protein ligase complex that mediates ubiquitination of Ras (K-Ras/KRAS, N-Ras/NRAS and H-Ras/HRAS). Is a negative regulator of RAS-MAPK signaling that acts by controlling Ras levels and decreasing Ras association with membranes. In Homo sapiens (Human), this protein is Leucine-zipper-like transcriptional regulator 1.